An 831-amino-acid polypeptide reads, in one-letter code: Cation/H(+) symporter 13 (831 aa).

12 helical membrane passes run 50–70 (YALP…RLIF), 89–109 (VVLG…FLPA), 112–132 (KIII…LLGL), 147–167 (ILIG…TIMF), 214–234 (LATH…LAFN), 250–270 (MIIG…VWLT), 282–302 (VVPF…GEAM), 303–323 (GVHA…GPPL), 334–354 (FASN…TNFF), 364–384 (VVMI…GTAA), 397–417 (LCLA…TIVW), and 430–450 (LVII…VYLY).

The protein belongs to the monovalent cation:proton antiporter 2 (CPA2) transporter (TC 2.A.37) family. CHX (TC 2.A.37.4) subfamily. As to expression, preferentially expressed in pollen before and after germination. Detected in pollen grains within anthers of the flower buds or in pollen on fully open flowers and on the stigma, and in pollen tubes growing in the style. Weakly expressed in roots.

The protein resides in the cell membrane. Its function is as follows. High-affinity potassium transporter that plays a role in K(+) acquisition. May operate as a K(+)/H(+) symporter. In Arabidopsis thaliana (Mouse-ear cress), this protein is Cation/H(+) symporter 13 (CHX13).